We begin with the raw amino-acid sequence, 314 residues long: tRNA dimethylallyltransferase (314 aa).

Residue 11–18 (GPTGSGKT) participates in ATP binding. 13 to 18 (TGSGKT) is a substrate binding site. Residues 36-39 (DSMQ) are interaction with substrate tRNA.

It belongs to the IPP transferase family. In terms of assembly, monomer. Mg(2+) is required as a cofactor.

The catalysed reaction is adenosine(37) in tRNA + dimethylallyl diphosphate = N(6)-dimethylallyladenosine(37) in tRNA + diphosphate. Functionally, catalyzes the transfer of a dimethylallyl group onto the adenine at position 37 in tRNAs that read codons beginning with uridine, leading to the formation of N6-(dimethylallyl)adenosine (i(6)A). This is tRNA dimethylallyltransferase from Chlamydia muridarum (strain MoPn / Nigg).